A 345-amino-acid chain; its full sequence is Beta-2-glycoprotein 1 (345 aa).

Residues 1-19 (MVSPVLALFSAFLCHVAIA) form the signal peptide. 4 Sushi domains span residues 21–81 (RICP…RCVP), 82–139 (RVCP…ACAR), 140–202 (ITCP…ECLE), and 203–262 (VKCP…TCRE). 11 cysteine pairs are disulfide-bonded: cysteine 23–cysteine 66, cysteine 51–cysteine 79, cysteine 84–cysteine 124, cysteine 110–cysteine 137, cysteine 142–cysteine 188, cysteine 174–cysteine 200, cysteine 205–cysteine 248, cysteine 234–cysteine 260, cysteine 264–cysteine 315, cysteine 300–cysteine 325, and cysteine 307–cysteine 345. O-linked (GalNAc...) threonine glycosylation is present at threonine 33. Residues asparagine 105, asparagine 117, asparagine 162, asparagine 183, and asparagine 193 are each glycosylated (N-linked (GlcNAc...) asparagine). Residues 263–345 (SCKLPVKKAT…KTDASELTPC (83 aa)) form a sushi-like region.

As to expression, expressed by the liver and secreted in plasma.

Its subcellular location is the secreted. Functionally, binds to various kinds of negatively charged substances such as heparin, phospholipids, and dextran sulfate. May prevent activation of the intrinsic blood coagulation cascade by binding to phospholipids on the surface of damaged cells. The polypeptide is Beta-2-glycoprotein 1 (Apoh) (Mus musculus (Mouse)).